The primary structure comprises 322 residues: N-acetyl-gamma-glutamyl-phosphate reductase (322 aa).

Cys132 is a catalytic residue.

This sequence belongs to the NAGSA dehydrogenase family. Type 1 subfamily.

It is found in the cytoplasm. It carries out the reaction N-acetyl-L-glutamate 5-semialdehyde + phosphate + NADP(+) = N-acetyl-L-glutamyl 5-phosphate + NADPH + H(+). Its pathway is amino-acid biosynthesis; L-arginine biosynthesis; N(2)-acetyl-L-ornithine from L-glutamate: step 3/4. In terms of biological role, catalyzes the NADPH-dependent reduction of N-acetyl-5-glutamyl phosphate to yield N-acetyl-L-glutamate 5-semialdehyde. The polypeptide is N-acetyl-gamma-glutamyl-phosphate reductase (Bacteroides fragilis (strain ATCC 25285 / DSM 2151 / CCUG 4856 / JCM 11019 / LMG 10263 / NCTC 9343 / Onslow / VPI 2553 / EN-2)).